The following is a 265-amino-acid chain: Taurine import ATP-binding protein TauB (265 aa).

In terms of domain architecture, ABC transporter spans 7–236 (QNLNMIFKTP…MGIDGDLREI (230 aa)). 41–48 (GPSGCGKT) contributes to the ATP binding site.

The protein belongs to the ABC transporter superfamily. Taurine importer (TC 3.A.1.17.1) family. In terms of assembly, the complex is composed of two ATP-binding proteins (TauB), two transmembrane proteins (TauC) and a solute-binding protein (TauA).

The protein resides in the cell inner membrane. The catalysed reaction is taurine(out) + ATP + H2O = taurine(in) + ADP + phosphate + H(+). Functionally, part of the ABC transporter complex TauABC involved in taurine import. Responsible for energy coupling to the transport system. The polypeptide is Taurine import ATP-binding protein TauB (Pelagibacter ubique (strain HTCC1062)).